The primary structure comprises 394 residues: MSKEKFKRSKPHINVGTIGHVDHGKTTLTSAITTVLSKKYGGAACAFDQIDNAPEEKARGITINTSHVEYDTSIRHYAHVDCPGHADYIKNMITGAAQMDGAILVVAATDGPMPQTREHILLGRQVGVPYIVVFLNKCDMVDDEELLELVEMEVRDLLTQYDFPGDSTPIVRGSALKALEGDPQWEQKILDLSNYLDTYIPEPKRSIDQPFLLPIEDVFSISGRGTVVTGRIERGIIKVGEEVEIVGIKSTVKTICTGVEMFRKLLDEGRAGENVGVLLRGTKRDDIERGQVLAKPGTITPHIKFESEVYVLSKEEGGRHTPFFKGYRPQFYFRTTDVTGSVELPEDMEMVMPGDNVKMVITLIHPIAMSDGLRFAIREGGKTVGAGIVVKVLQ.

Residues 10–204 (KPHINVGTIG…YLDTYIPEPK (195 aa)) form the tr-type G domain. The G1 stretch occupies residues 19 to 26 (GHVDHGKT). Residue 19–26 (GHVDHGKT) coordinates GTP. Threonine 26 lines the Mg(2+) pocket. A G2 region spans residues 60–64 (GITIN). Residues 81–84 (DCPG) form a G3 region. Residues 81-85 (DCPGH) and 136-139 (NKCD) contribute to the GTP site. The G4 stretch occupies residues 136–139 (NKCD). The tract at residues 174 to 176 (SAL) is G5.

This sequence belongs to the TRAFAC class translation factor GTPase superfamily. Classic translation factor GTPase family. EF-Tu/EF-1A subfamily. As to quaternary structure, monomer.

It localises to the cytoplasm. The catalysed reaction is GTP + H2O = GDP + phosphate + H(+). GTP hydrolase that promotes the GTP-dependent binding of aminoacyl-tRNA to the A-site of ribosomes during protein biosynthesis. The chain is Elongation factor Tu from Buchnera aphidicola subsp. Baizongia pistaciae (strain Bp).